The primary structure comprises 153 residues: CASP-like protein 5B1 (153 aa).

The Cytoplasmic segment spans residues 1 to 20 (MRELAGSPGTWSGLSLRVGQ). A helical transmembrane segment spans residues 21–41 (LVFAAASVCATASALGFAAYT). A topological domain (extracellular) is located at residue Ala42. Residues 43–63 (FCYLIASMGLQALWSLGLACL) form a helical membrane-spanning segment. Over 64–76 (DCYALKFKKDLHS) the chain is Cytoplasmic. A helical membrane pass occupies residues 77-97 (AVLLSLFVVGDWVTAILSFAA). Residues 98 to 128 (SCSAAGVVVLFDRDIYACRNPQLPCGRFELA) are Extracellular-facing. Residues 129-149 (IACAFLSWAFSATSALVMFWL) form a helical membrane-spanning segment. Topologically, residues 150–153 (LASL) are cytoplasmic.

This sequence belongs to the Casparian strip membrane proteins (CASP) family. In terms of assembly, homodimer and heterodimers.

It localises to the cell membrane. The protein is CASP-like protein 5B1 of Oryza sativa subsp. indica (Rice).